Here is a 507-residue protein sequence, read N- to C-terminus: 25-hydroxyvitamin D-1 alpha hydroxylase, mitochondrial (507 aa).

Cysteine 454 contributes to the heme binding site.

This sequence belongs to the cytochrome P450 family. Requires heme as cofactor. Kidney.

It is found in the mitochondrion membrane. It carries out the reaction calcidiol + 2 reduced [adrenodoxin] + O2 + 2 H(+) = calcitriol + 2 oxidized [adrenodoxin] + H2O. The enzyme catalyses secalciferol + 2 reduced [adrenodoxin] + O2 + 2 H(+) = calcitetrol + 2 oxidized [adrenodoxin] + H2O. It catalyses the reaction 25-hydroxy-24-oxocalciol + 2 reduced [adrenodoxin] + O2 + 2 H(+) = (1S)-1,25-dihydroxy-24-oxocalciol + 2 oxidized [adrenodoxin] + H2O. The catalysed reaction is 25-hydroxyvitamin D2 + 2 reduced [adrenodoxin] + O2 + 2 H(+) = 1alpha,25-dihydroxyvitamin D2 + 2 oxidized [adrenodoxin] + H2O. The protein operates within hormone biosynthesis; vitamin D biosynthesis. Activated by cardiolipin and dioleoyl phosphatidylethanolamine (DOPE), phospholipids found in the inner mitochondrial membrane. Inhibited by high substrate concentration. A cytochrome P450 monooxygenase involved in vitamin D metabolism and in calcium and phosphorus homeostasis. Catalyzes the rate-limiting step in the activation of vitamin D in the kidney, namely the hydroxylation of 25-hydroxyvitamin D3/calcidiol at the C1-alpha position to form the hormonally active form of vitamin D3, 1alpha,25-dihydroxyvitamin D3/calcitriol that acts via the vitamin D receptor (VDR). Has 1-alpha-hydroxylase activity on vitamin D intermediates of the CYP24A1-mediated inactivation pathway. Converts 24R,25-dihydroxyvitamin D3/secalciferol to 1-alpha,24,25-trihydroxyvitamin D3, an active ligand of VDR. Also active on 25-hydroxyvitamin D2. Mechanistically, uses molecular oxygen inserting one oxygen atom into a substrate, and reducing the second into a water molecule, with two electrons provided by NADPH via FDXR/adrenodoxin reductase and FDX1/adrenodoxin. The sequence is that of 25-hydroxyvitamin D-1 alpha hydroxylase, mitochondrial (Cyp27b1) from Mus musculus (Mouse).